We begin with the raw amino-acid sequence, 235 residues long: Large ribosomal subunit protein uL1 (235 aa).

The protein belongs to the universal ribosomal protein uL1 family. As to quaternary structure, part of the 50S ribosomal subunit.

Functionally, binds directly to 23S rRNA. The L1 stalk is quite mobile in the ribosome, and is involved in E site tRNA release. Protein L1 is also a translational repressor protein, it controls the translation of the L11 operon by binding to its mRNA. This Mycobacterium sp. (strain JLS) protein is Large ribosomal subunit protein uL1.